A 605-amino-acid polypeptide reads, in one-letter code: UvrABC system protein C (605 aa).

The GIY-YIG domain maps to 14 to 92 (QSCGVYKMVG…IKSLKPLYNI (79 aa)). Residues 202–237 (KEVKEQLLFTMRKCSSEENYELAAIYRDRVKFLEQI) enclose the UVR domain.

The protein belongs to the UvrC family. Interacts with UvrB in an incision complex.

The protein resides in the cytoplasm. Functionally, the UvrABC repair system catalyzes the recognition and processing of DNA lesions. UvrC both incises the 5' and 3' sides of the lesion. The N-terminal half is responsible for the 3' incision and the C-terminal half is responsible for the 5' incision. The sequence is that of UvrABC system protein C from Wolbachia sp. subsp. Drosophila simulans (strain wRi).